We begin with the raw amino-acid sequence, 270 residues long: Bis(5'-nucleosyl)-tetraphosphatase, symmetrical (270 aa).

The protein belongs to the Ap4A hydrolase family.

The enzyme catalyses P(1),P(4)-bis(5'-adenosyl) tetraphosphate + H2O = 2 ADP + 2 H(+). Its function is as follows. Hydrolyzes diadenosine 5',5'''-P1,P4-tetraphosphate to yield ADP. The polypeptide is Bis(5'-nucleosyl)-tetraphosphatase, symmetrical (Cellvibrio japonicus (strain Ueda107) (Pseudomonas fluorescens subsp. cellulosa)).